We begin with the raw amino-acid sequence, 189 residues long: Calcyphosin (189 aa).

4 EF-hand domains span residues 21-56, 57-92, 93-128, and 136-172; these read SGIQGVARFFRRLDQDGSRSLDVRELQRGLAELGLV, LDTAEMEGVCRRWDRDGSGTLDLEEFLRALRPPMSQ, AREAVVTAAFAKLDRSGDGVVTVDDLRGVYSGRTHP, and TEEQVLRHFLDNFDSSEKDGQVTLAEFQDYYSGVSAS. Asp34, Asp36, Ser38, Ser40, Glu45, Asp70, Asp72, Ser74, Thr76, Glu81, Asp106, Ser108, Asp110, and Asp117 together coordinate Ca(2+). Ser40 is subject to Phosphoserine; by PKA.

As to quaternary structure, monomer. Does not form oligomers in the presence of calcium.

It is found in the cytoplasm. In terms of biological role, calcium-binding protein. May play a role in cellular signaling events (Potential). The sequence is that of Calcyphosin (CAPS) from Bos taurus (Bovine).